A 334-amino-acid chain; its full sequence is Glycerol-3-phosphate dehydrogenase [NAD(P)+] (334 aa).

NADPH-binding residues include serine 14, tyrosine 15, histidine 35, and lysine 109. Positions 109, 138, and 140 each coordinate sn-glycerol 3-phosphate. NADPH is bound at residue alanine 142. Sn-glycerol 3-phosphate contacts are provided by lysine 194, aspartate 247, serine 257, arginine 258, and asparagine 259. Lysine 194 functions as the Proton acceptor in the catalytic mechanism. Arginine 258 is an NADPH binding site. 2 residues coordinate NADPH: valine 282 and glutamate 284.

Belongs to the NAD-dependent glycerol-3-phosphate dehydrogenase family.

It is found in the cytoplasm. It carries out the reaction sn-glycerol 3-phosphate + NAD(+) = dihydroxyacetone phosphate + NADH + H(+). It catalyses the reaction sn-glycerol 3-phosphate + NADP(+) = dihydroxyacetone phosphate + NADPH + H(+). The protein operates within membrane lipid metabolism; glycerophospholipid metabolism. Its function is as follows. Catalyzes the reduction of the glycolytic intermediate dihydroxyacetone phosphate (DHAP) to sn-glycerol 3-phosphate (G3P), the key precursor for phospholipid synthesis. The sequence is that of Glycerol-3-phosphate dehydrogenase [NAD(P)+] from Tolumonas auensis (strain DSM 9187 / NBRC 110442 / TA 4).